A 396-amino-acid polypeptide reads, in one-letter code: Probable sugar efflux transporter (396 aa).

Transmembrane regions (helical) follow at residues 15-35 (VVTL…PVGL), 50-70 (VGIM…PFML), 81-101 (LICL…AWNF), 103-123 (VLVI…SITA), 136-156 (AQAL…GLPI), 169-189 (TFFA…KLLP), 209-229 (PALM…YTAY), 246-266 (FATV…LVFG), 275-295 (SLVS…LPAA), 301-321 (LAIL…GMQV), 333-353 (VAMA…ALVG), and 364-384 (AIGY…VLIF).

Belongs to the major facilitator superfamily. SotB (TC 2.A.1.2) family.

It is found in the cell inner membrane. Functionally, involved in the efflux of sugars. The physiological role may be the reduction of the intracellular concentration of toxic sugars or sugar metabolites. The chain is Probable sugar efflux transporter from Salmonella schwarzengrund (strain CVM19633).